The primary structure comprises 1317 residues: DNA-directed RNA polymerase subunit beta' (1317 aa).

Zn(2+)-binding residues include cysteine 214, cysteine 286, cysteine 293, and cysteine 296. Residues 1279 to 1317 form a disordered region; it reads RAYAGTQLSQDDEEFEETYDTDEDDFDMDDDDDFGDDED. The segment covering 1288-1317 has biased composition (acidic residues); it reads QDDEEFEETYDTDEDDFDMDDDDDFGDDED.

This sequence belongs to the RNA polymerase beta' chain family. RpoC2 subfamily. As to quaternary structure, in cyanobacteria the RNAP catalytic core is composed of 2 alpha, 1 beta, 1 beta', 1 gamma and 1 omega subunit. When a sigma factor is associated with the core the holoenzyme is formed, which can initiate transcription. Zn(2+) is required as a cofactor.

The enzyme catalyses RNA(n) + a ribonucleoside 5'-triphosphate = RNA(n+1) + diphosphate. Its function is as follows. DNA-dependent RNA polymerase catalyzes the transcription of DNA into RNA using the four ribonucleoside triphosphates as substrates. The sequence is that of DNA-directed RNA polymerase subunit beta' from Synechocystis sp. (strain ATCC 27184 / PCC 6803 / Kazusa).